The sequence spans 464 residues: UDP-N-acetylmuramoylalanine--D-glutamate ligase (464 aa).

An ATP-binding site is contributed by 127 to 133 (GSNGKST).

The protein belongs to the MurCDEF family.

The protein resides in the cytoplasm. It carries out the reaction UDP-N-acetyl-alpha-D-muramoyl-L-alanine + D-glutamate + ATP = UDP-N-acetyl-alpha-D-muramoyl-L-alanyl-D-glutamate + ADP + phosphate + H(+). It participates in cell wall biogenesis; peptidoglycan biosynthesis. Cell wall formation. Catalyzes the addition of glutamate to the nucleotide precursor UDP-N-acetylmuramoyl-L-alanine (UMA). The protein is UDP-N-acetylmuramoylalanine--D-glutamate ligase of Dinoroseobacter shibae (strain DSM 16493 / NCIMB 14021 / DFL 12).